We begin with the raw amino-acid sequence, 156 residues long: Small ribosomal subunit protein uS7 (156 aa).

It belongs to the universal ribosomal protein uS7 family. In terms of assembly, part of the 30S ribosomal subunit. Contacts proteins S9 and S11.

Its function is as follows. One of the primary rRNA binding proteins, it binds directly to 16S rRNA where it nucleates assembly of the head domain of the 30S subunit. Is located at the subunit interface close to the decoding center, probably blocks exit of the E-site tRNA. In Dinoroseobacter shibae (strain DSM 16493 / NCIMB 14021 / DFL 12), this protein is Small ribosomal subunit protein uS7.